A 963-amino-acid polypeptide reads, in one-letter code: Protein translocase subunit SecA (963 aa).

ATP is bound by residues Gln87, 105 to 109 (GEGKT), and Asp524. Zn(2+) is bound by residues Cys946, Cys948, Cys957, and His958.

This sequence belongs to the SecA family. As to quaternary structure, monomer and homodimer. Part of the essential Sec protein translocation apparatus which comprises SecA, SecYEG and auxiliary proteins SecDF-YajC and YidC. Zn(2+) is required as a cofactor.

The protein localises to the cell inner membrane. It localises to the cytoplasm. It carries out the reaction ATP + H2O + cellular proteinSide 1 = ADP + phosphate + cellular proteinSide 2.. In terms of biological role, part of the Sec protein translocase complex. Interacts with the SecYEG preprotein conducting channel. Has a central role in coupling the hydrolysis of ATP to the transfer of proteins into and across the cell membrane, serving both as a receptor for the preprotein-SecB complex and as an ATP-driven molecular motor driving the stepwise translocation of polypeptide chains across the membrane. This is Protein translocase subunit SecA from Methylobacterium radiotolerans (strain ATCC 27329 / DSM 1819 / JCM 2831 / NBRC 15690 / NCIMB 10815 / 0-1).